A 117-amino-acid polypeptide reads, in one-letter code: Putative pterin-4-alpha-carbinolamine dehydratase (117 aa).

The protein belongs to the pterin-4-alpha-carbinolamine dehydratase family.

It carries out the reaction (4aS,6R)-4a-hydroxy-L-erythro-5,6,7,8-tetrahydrobiopterin = (6R)-L-erythro-6,7-dihydrobiopterin + H2O. In Colwellia psychrerythraea (strain 34H / ATCC BAA-681) (Vibrio psychroerythus), this protein is Putative pterin-4-alpha-carbinolamine dehydratase.